A 118-amino-acid polypeptide reads, in one-letter code: uncharacterized protein (118 aa).

The protein localises to the mitochondrion. This is an uncharacterized protein from Arabidopsis thaliana (Mouse-ear cress).